The primary structure comprises 156 residues: Small ribosomal subunit protein uS7 (156 aa).

This sequence belongs to the universal ribosomal protein uS7 family. In terms of assembly, part of the 30S ribosomal subunit. Contacts proteins S9 and S11.

Functionally, one of the primary rRNA binding proteins, it binds directly to 16S rRNA where it nucleates assembly of the head domain of the 30S subunit. Is located at the subunit interface close to the decoding center, probably blocks exit of the E-site tRNA. This chain is Small ribosomal subunit protein uS7, found in Alkaliphilus metalliredigens (strain QYMF).